The following is a 670-amino-acid chain: Leucine-rich repeat-containing protein 45 (670 aa).

LRR repeat units follow at residues 58-80 (TLCT…LLLR), 87-107 (VLRF…EALG), 115-136 (SIQS…FATF), 145-166 (ALQR…ELAL), 173-194 (TLQQ…ALMN), and 201-212 (TLWRLDLAGNNI). A coiled-coil region spans residues 252–645 (REEKSKQFLD…IARIRDEEAQ (394 aa)). At Ser661 the chain carries Phosphoserine; by NEK2.

Homomer. Interacts with CROCC/rootletin and CEP250. Interacts with CEP44. Interacts with CCDC102B (via N-terminus). Post-translationally, phosphorylated by NEK2 during misosis, phosphorylation reduces centrosomal localization which subsequently leads to centrosome separation.

It is found in the cytoplasm. It localises to the cytoskeleton. The protein localises to the microtubule organizing center. Its subcellular location is the centrosome. Functionally, component of the proteinaceous fiber-like linker between two centrioles, required for centrosome cohesion. The chain is Leucine-rich repeat-containing protein 45 (LRRC45) from Homo sapiens (Human).